The sequence spans 234 residues: Synaptogyrin-1 (234 aa).

An N-acetylmethionine modification is found at methionine 1. Topologically, residues 1 to 23 (MEGGAYGAGKAGGAFDPYALVRQ) are cytoplasmic. One can recognise an MARVEL domain in the interval 20–173 (LVRQPHTILR…QAVLAFQRYQ (154 aa)). Residues 24–44 (PHTILRVVSWLFSIVVFGSIV) form a helical membrane-spanning segment. At 45–71 (NEGYLNSASEGEEFCIYNRNPNACSYG) the chain is on the lumenal side. Residues 72–92 (VAVGVLAFLTCLLYLALDVYF) form a helical membrane-spanning segment. Residues 93-103 (PQISSVKDRKK) are Cytoplasmic-facing. Residues 104–124 (AVLSDIGVSAFWAFLWFVGFC) traverse the membrane as a helical segment. Topologically, residues 125 to 148 (YLANQWQVSKPKDNPLNEGTDAAR) are lumenal. The helical transmembrane segment at 149–169 (AAIAFSFFSIFTWAGQAVLAF) threads the bilayer. Over 170 to 234 (QRYQIGADSA…EPQGYQSQGY (65 aa)) the chain is Cytoplasmic. The interval 192 to 234 (SSMPYAPYVEPSTGPDPAGMGGTYQQPANTFDTEPQGYQSQGY) is disordered. The span at 214 to 234 (TYQQPANTFDTEPQGYQSQGY) shows a compositional bias: polar residues.

Belongs to the synaptogyrin family.

The protein localises to the cytoplasmic vesicle. It localises to the secretory vesicle. The protein resides in the synaptic vesicle membrane. It is found in the melanosome. Its function is as follows. May play a role in regulated exocytosis. Modulates the localization of synaptophysin/SYP into synaptic-like microvesicles and may therefore play a role in synaptic-like microvesicle formation and/or maturation. Involved in the regulation of short-term and long-term synaptic plasticity. The polypeptide is Synaptogyrin-1 (Pongo abelii (Sumatran orangutan)).